We begin with the raw amino-acid sequence, 335 residues long: Hsp90 co-chaperone Cdc37-like 1 (335 aa).

Over residues 1–11 the composition is skewed to pro residues; the sequence is MEQPWPPPGPW. The segment at 1 to 42 is disordered; that stretch reads MEQPWPPPGPWSFPRTGGETEEESDLDVSPSSSHYSPVPDGG. Residues 2 to 170 are self-association; sequence EQPWPPPGPW…YEQKIRHFGM (169 aa). Over residues 27–40 the composition is skewed to low complexity; the sequence is DVSPSSSHYSPVPD. 2 positions are modified to phosphoserine: Ser32 and Ser88. The stretch at 84-120 forms a coiled coil; sequence HNSESLDQEHAKAQTAVSELRQREEEWRQKEEALVQR. Residues 147–276 form a self-association and interaction with Hsp90 region; the sequence is KTEEEDKSQS…SRVRLYAQSQ (130 aa). The tract at residues 266 to 335 is interaction with Hsp70; that stretch reads KSRVRLYAQS…EDDDRMMDTV (70 aa). Residues 277-335 form a required for interaction with STIP1 region; that stretch reads SLQPVTVQNHVPHSGVGCIGSLESLPQNPDSLQCCTPAPLCSVDSVVHKEDDDRMMDTV.

This sequence belongs to the CDC37 family. Self-associates. Forms complexes with Hsp70 and Hsp90. Interacts with CDC37, FKBP4, PPID and STIP1.

Its subcellular location is the cytoplasm. Functionally, co-chaperone that binds to numerous proteins and promotes their interaction with Hsp70 and Hsp90. This is Hsp90 co-chaperone Cdc37-like 1 (Cdc37l1) from Mus musculus (Mouse).